Consider the following 361-residue polypeptide: Dihydroorotate dehydrogenase (quinone) (361 aa).

FMN-binding positions include 69–73 and threonine 93; that span reads AGFDK. Lysine 73 is a binding site for substrate. 118–122 lines the substrate pocket; that stretch reads NRLGF. FMN is bound by residues asparagine 147 and asparagine 180. Substrate is bound at residue asparagine 180. The active-site Nucleophile is serine 183. Asparagine 185 serves as a coordination point for substrate. FMN contacts are provided by lysine 221 and threonine 249. 250–251 is a substrate binding site; sequence NT. Residues glycine 271, glycine 300, and 321-322 each bind FMN; that span reads YT.

Belongs to the dihydroorotate dehydrogenase family. Type 2 subfamily. Monomer. FMN is required as a cofactor.

Its subcellular location is the cell membrane. It carries out the reaction (S)-dihydroorotate + a quinone = orotate + a quinol. It participates in pyrimidine metabolism; UMP biosynthesis via de novo pathway; orotate from (S)-dihydroorotate (quinone route): step 1/1. Catalyzes the conversion of dihydroorotate to orotate with quinone as electron acceptor. This chain is Dihydroorotate dehydrogenase (quinone), found in Roseiflexus sp. (strain RS-1).